The primary structure comprises 473 residues: Mediator of RNA polymerase II transcription subunit 29 (473 aa).

Polar residues predominate over residues 1–12 (MSGQGPPSNLTP). 2 disordered regions span residues 1 to 319 (MSGQ…NEEQ) and 444 to 473 (STME…EMAE). A compositionally biased stretch (low complexity) spans 13–50 (QQQHMIMQQQQQQQMMRQQQIQQQQLHQRQLQQQQAQQ). A compositionally biased stretch (polar residues) spans 51–62 (SYQRSRTPQMQQ). Composition is skewed to low complexity over residues 111–123 (QMMQ…NQPM) and 130–139 (VSRPGSVAPP). Polar residues-rich tracts occupy residues 148-183 (TGPS…QQSH) and 255-269 (PPGS…QPGS). Low complexity-rich tracts occupy residues 272–286 (APGS…QPPA) and 294–308 (AASG…AAPA).

The protein belongs to the Mediator complex subunit 29 family. Component of the Mediator complex.

The protein localises to the nucleus. Functionally, component of the Mediator complex, a coactivator involved in the regulated transcription of nearly all RNA polymerase II-dependent genes. Mediator functions as a bridge to convey information from gene-specific regulatory proteins to the basal RNA polymerase II transcription machinery. Mediator is recruited to promoters by direct interactions with regulatory proteins and serves as a scaffold for the assembly of a functional preinitiation complex with RNA polymerase II and the general transcription factors. The chain is Mediator of RNA polymerase II transcription subunit 29 (mdt-29) from Caenorhabditis briggsae.